We begin with the raw amino-acid sequence, 865 residues long: Protein translocase subunit SecA (865 aa).

ATP-binding positions include Gln-85, 103–107 (GEGKT), and Asp-505. Residues Cys-847, Cys-849, Cys-858, and His-859 each contribute to the Zn(2+) site.

Belongs to the SecA family. Monomer and homodimer. Part of the essential Sec protein translocation apparatus which comprises SecA, SecYEG and auxiliary proteins SecDF. Other proteins may also be involved. Zn(2+) is required as a cofactor.

The protein localises to the cell membrane. It localises to the cytoplasm. It catalyses the reaction ATP + H2O + cellular proteinSide 1 = ADP + phosphate + cellular proteinSide 2.. Part of the Sec protein translocase complex. Interacts with the SecYEG preprotein conducting channel. Has a central role in coupling the hydrolysis of ATP to the transfer of proteins into and across the cell membrane, serving as an ATP-driven molecular motor driving the stepwise translocation of polypeptide chains across the membrane. The polypeptide is Protein translocase subunit SecA (Lactococcus lactis subsp. lactis (strain IL1403) (Streptococcus lactis)).